The primary structure comprises 537 residues: CWF19-like protein 1 (537 aa).

The segment at 297–323 (KQGRKRPSTGRDTRPPHAKQPRKPPQP) is disordered.

This sequence belongs to the CWF19 family.

This chain is CWF19-like protein 1 (Cwf19l1), found in Mus musculus (Mouse).